The primary structure comprises 366 residues: NADH-quinone oxidoreductase subunit D (366 aa).

The protein belongs to the complex I 49 kDa subunit family. As to quaternary structure, NDH-1 is composed of 14 different subunits. Subunits NuoB, C, D, E, F, and G constitute the peripheral sector of the complex.

Its subcellular location is the cell membrane. It catalyses the reaction a quinone + NADH + 5 H(+)(in) = a quinol + NAD(+) + 4 H(+)(out). In terms of biological role, NDH-1 shuttles electrons from NADH, via FMN and iron-sulfur (Fe-S) centers, to quinones in the respiratory chain. The immediate electron acceptor for the enzyme in this species is believed to be a menaquinone. Couples the redox reaction to proton translocation (for every two electrons transferred, four hydrogen ions are translocated across the cytoplasmic membrane), and thus conserves the redox energy in a proton gradient. The polypeptide is NADH-quinone oxidoreductase subunit D (Bacillus cytotoxicus (strain DSM 22905 / CIP 110041 / 391-98 / NVH 391-98)).